A 553-amino-acid polypeptide reads, in one-letter code: Meiotic expression up-regulated protein 18 (553 aa).

The segment at 267 to 305 (SNETLCSNDSKHRIARLKNEDNTQKPISKKRKSKKASHK) is disordered. The segment covering 275–289 (DSKHRIARLKNEDNT) has biased composition (basic and acidic residues). Residues 293–304 (ISKKRKSKKASH) show a composition bias toward basic residues.

In Schizosaccharomyces pombe (strain 972 / ATCC 24843) (Fission yeast), this protein is Meiotic expression up-regulated protein 18 (meu18).